We begin with the raw amino-acid sequence, 31 residues long: Cytochrome b6-f complex subunit 6 (31 aa).

The chain crosses the membrane as a helical span at residues 4–24 (ITSYFGFLLAALTITSALFIG).

Belongs to the PetL family. As to quaternary structure, the 4 large subunits of the cytochrome b6-f complex are cytochrome b6, subunit IV (17 kDa polypeptide, PetD), cytochrome f and the Rieske protein, while the 4 small subunits are PetG, PetL, PetM and PetN. The complex functions as a dimer.

It localises to the plastid. Its subcellular location is the chloroplast thylakoid membrane. Component of the cytochrome b6-f complex, which mediates electron transfer between photosystem II (PSII) and photosystem I (PSI), cyclic electron flow around PSI, and state transitions. PetL is important for photoautotrophic growth as well as for electron transfer efficiency and stability of the cytochrome b6-f complex. This is Cytochrome b6-f complex subunit 6 from Hamamelis virginiana (Witch-hazel).